The chain runs to 258 residues: Ribosomal RNA small subunit methyltransferase A (258 aa).

His-13, Leu-15, Gly-40, Glu-62, Asp-87, and Asn-108 together coordinate S-adenosyl-L-methionine.

Belongs to the class I-like SAM-binding methyltransferase superfamily. rRNA adenine N(6)-methyltransferase family. RsmA subfamily.

Its subcellular location is the cytoplasm. The enzyme catalyses adenosine(1518)/adenosine(1519) in 16S rRNA + 4 S-adenosyl-L-methionine = N(6)-dimethyladenosine(1518)/N(6)-dimethyladenosine(1519) in 16S rRNA + 4 S-adenosyl-L-homocysteine + 4 H(+). Functionally, specifically dimethylates two adjacent adenosines (A1518 and A1519) in the loop of a conserved hairpin near the 3'-end of 16S rRNA in the 30S particle. May play a critical role in biogenesis of 30S subunits. The sequence is that of Ribosomal RNA small subunit methyltransferase A from Sulfurihydrogenibium sp. (strain YO3AOP1).